Consider the following 452-residue polypeptide: Packaging protein 1 (452 aa).

The segment at 1 to 78 (MLPCRSTGRR…AKPPQRGSLL (78 aa)) is disordered. 173–180 (GPTGCGKS) lines the ATP pocket. The interval 442-452 (RAYHVRKNKYQ) is DNA-binding.

The protein belongs to the adenoviridae packaging protein 1 family. Homodimer. Part of a genome packaging complex composed of packaging proteins 1, 2 and 3; this complex specifically binds to the packaging sequence on the left end of viral genomic DNA and performs packaging of the viral genome. Interacts with protein 33K.

It is found in the virion. Its subcellular location is the host nucleus. The protein localises to the host nucleoplasm. It localises to the host nucleolus. Functionally, component of the packaging machinery which encapsidates the viral DNA into preformed capsids and transcriptional activator of the viral major late promoter (MLP). Binds, along with packaging proteins 2 and 3, to the specific packaging sequence on the left end of viral genomic DNA and displays ATPase activity thereby providing the power stroke of the packaging machinery. The activity of packaging protein IVa2 is stimulated by protein 33K which acts as a terminase. May be the protein that pumps DNA into the capsid powered by ATP hydrolysis. Specifically binds to the 5'-CG-3' nucleotides of the repeats making up the packaging sequence. Component of the DEF-A and DEF-B transcription factors that bind downstream elements of the major late promoter (MLP), and stimulate transcription from the MLP after initiation of viral DNA replication. DEF-A is a heterodimer packaging proteins 1 and 2 and DEF-B is a homodimer of packaging protein 1. The sequence is that of Packaging protein 1 from Homo sapiens (Human).